Here is a 414-residue protein sequence, read N- to C-terminus: Probable aminotransferase TAT2 (414 aa).

It belongs to the class-I pyridoxal-phosphate-dependent aminotransferase family. Requires pyridoxal 5'-phosphate as cofactor.

The sequence is that of Probable aminotransferase TAT2 from Arabidopsis thaliana (Mouse-ear cress).